The primary structure comprises 150 residues: 3-dehydroquinate dehydratase (150 aa).

The active-site Proton acceptor is the Y26. Substrate is bound by residues N77, H83, and D90. H103 functions as the Proton donor in the catalytic mechanism. Substrate is bound by residues 104-105 (LS) and R114.

Belongs to the type-II 3-dehydroquinase family. Homododecamer.

The catalysed reaction is 3-dehydroquinate = 3-dehydroshikimate + H2O. It participates in metabolic intermediate biosynthesis; chorismate biosynthesis; chorismate from D-erythrose 4-phosphate and phosphoenolpyruvate: step 3/7. Catalyzes a trans-dehydration via an enolate intermediate. In Sodalis glossinidius (strain morsitans), this protein is 3-dehydroquinate dehydratase.